The sequence spans 465 residues: 3-isopropylmalate dehydratase large subunit (465 aa).

The [4Fe-4S] cluster site is built by Cys347, Cys407, and Cys410.

This sequence belongs to the aconitase/IPM isomerase family. LeuC type 1 subfamily. In terms of assembly, heterodimer of LeuC and LeuD. Requires [4Fe-4S] cluster as cofactor.

It catalyses the reaction (2R,3S)-3-isopropylmalate = (2S)-2-isopropylmalate. The protein operates within amino-acid biosynthesis; L-leucine biosynthesis; L-leucine from 3-methyl-2-oxobutanoate: step 2/4. Catalyzes the isomerization between 2-isopropylmalate and 3-isopropylmalate, via the formation of 2-isopropylmaleate. The sequence is that of 3-isopropylmalate dehydratase large subunit from Tolumonas auensis (strain DSM 9187 / NBRC 110442 / TA 4).